The following is a 128-amino-acid chain: Azurin (128 aa).

The Plastocyanin-like domain occupies 1–128 (AECKVTVDST…SMMKGTVTLK (128 aa)). Cysteines 3 and 26 form a disulfide. Cu cation-binding residues include His46, Cys112, His117, and Met121.

It localises to the periplasm. Functionally, transfers electrons from cytochrome c551 to cytochrome oxidase. This is Azurin from Pseudomonas putida (Arthrobacter siderocapsulatus).